A 469-amino-acid polypeptide reads, in one-letter code: Neuraminidase (469 aa).

At 1-6 (MNPNQK) the chain is on the intravirion side. Residues 7-27 (LFASSGIAIALGIINLLIGIS) traverse the membrane as a helical segment. The involved in apical transport and lipid raft association stretch occupies residues 11–33 (SGIAIALGIINLLIGISNMSLNI). Asn-28, Asn-32, Asn-46, Asn-55, Asn-56, Asn-65, Asn-66, and Asn-85 each carry an N-linked (GlcNAc...) asparagine; by host glycan. Residues 28–469 (NMSLNISLYS…PDGAQIKYFS (442 aa)) are Virion surface-facing. The segment at 36 to 85 (YSKGENHKSDNLTCTNINQNNTTMVNTYINNTTIIDKNTKMENPGYLLLN) is hypervariable stalk region. The segment at 88–469 (LCNVEGWVVI…PDGAQIKYFS (382 aa)) is head of neuraminidase. 8 disulfide bridges follow: Cys-89-Cys-417, Cys-121-Cys-126, Cys-181-Cys-228, Cys-230-Cys-235, Cys-276-Cys-289, Cys-278-Cys-287, Cys-316-Cys-334, and Cys-421-Cys-448. Arg-115 is a binding site for substrate. An N-linked (GlcNAc...) asparagine; by host glycan is attached at Asn-143. The active-site Proton donor/acceptor is Asp-148. Arg-149 contacts substrate. Residues Asn-198 and Asn-232 are each glycosylated (N-linked (GlcNAc...) asparagine; by host). 274 to 275 (EE) is a binding site for substrate. Arg-290 contacts substrate. Ca(2+) contacts are provided by Asp-291, Gly-295, and Asp-322. An N-linked (GlcNAc...) asparagine; by host glycan is attached at Asn-356. Residue Arg-369 coordinates substrate. A glycan (N-linked (GlcNAc...) asparagine; by host) is linked at Asn-399. Tyr-403 serves as the catalytic Nucleophile.

It belongs to the glycosyl hydrolase 34 family. In terms of assembly, homotetramer. It depends on Ca(2+) as a cofactor. Post-translationally, N-glycosylated.

The protein localises to the virion membrane. The protein resides in the host apical cell membrane. The catalysed reaction is Hydrolysis of alpha-(2-&gt;3)-, alpha-(2-&gt;6)-, alpha-(2-&gt;8)- glycosidic linkages of terminal sialic acid residues in oligosaccharides, glycoproteins, glycolipids, colominic acid and synthetic substrates.. With respect to regulation, inhibited by the neuraminidase inhibitors zanamivir (Relenza) and oseltamivir (Tamiflu). These drugs interfere with the release of progeny virus from infected cells and are effective against all influenza strains. Resistance to neuraminidase inhibitors is quite rare. In terms of biological role, catalyzes the removal of terminal sialic acid residues from viral and cellular glycoconjugates. Cleaves off the terminal sialic acids on the glycosylated HA during virus budding to facilitate virus release. Additionally helps virus spread through the circulation by further removing sialic acids from the cell surface. These cleavages prevent self-aggregation and ensure the efficient spread of the progeny virus from cell to cell. Otherwise, infection would be limited to one round of replication. Described as a receptor-destroying enzyme because it cleaves a terminal sialic acid from the cellular receptors. May facilitate viral invasion of the upper airways by cleaving the sialic acid moieties on the mucin of the airway epithelial cells. Likely to plays a role in the budding process through its association with lipid rafts during intracellular transport. May additionally display a raft-association independent effect on budding. Plays a role in the determination of host range restriction on replication and virulence. Sialidase activity in late endosome/lysosome traffic seems to enhance virus replication. The sequence is that of Neuraminidase from Influenza A virus (strain A/Equine/Prague/1/1956 H7N7).